The sequence spans 131 residues: Peptide methionine sulfoxide reductase MsrB (131 aa).

A MsrB domain is found at Asp9–Glu131. The Zn(2+) site is built by Cys48, Cys51, Cys97, and Cys100. Cys120 (nucleophile) is an active-site residue.

The protein belongs to the MsrB Met sulfoxide reductase family. Zn(2+) is required as a cofactor.

It carries out the reaction L-methionyl-[protein] + [thioredoxin]-disulfide + H2O = L-methionyl-(R)-S-oxide-[protein] + [thioredoxin]-dithiol. This is Peptide methionine sulfoxide reductase MsrB from Leptospira interrogans serogroup Icterohaemorrhagiae serovar Lai (strain 56601).